The chain runs to 90 residues: DNA-binding protein HTa (90 aa).

It belongs to the bacterial histone-like protein family. In terms of assembly, homotetramer.

Histone-like DNA-binding protein which is capable of wrapping DNA to stabilize it, and thus to prevent its denaturation under extreme environmental conditions. This chain is DNA-binding protein HTa, found in Thermoplasma acidophilum (strain ATCC 25905 / DSM 1728 / JCM 9062 / NBRC 15155 / AMRC-C165).